Reading from the N-terminus, the 656-residue chain is Rab proteins geranylgeranyltransferase component A 2 (656 aa).

2 disordered regions span residues 188-209 and 609-656; these read MHTVSDKDGDKDESKSTVEDKA and PPPN…HLQN. The segment covering 639 to 656 has biased composition (basic and acidic residues); that stretch reads ESSEESKNLESPEKHLQN. Ser649 bears the Phosphoserine mark.

The protein belongs to the Rab GDI family. In terms of assembly, monomer. Heterotrimer composed of RABGGTA, RABGGTB and CHML; within this trimer, RABGGTA and RABGGTB form the catalytic component B, while CHML (component A) mediates Rab protein binding. Interacts with RAB1A, RAB7A and RAB27A, but has much lower affinity for RAB1A, RAB7A and RAB27A than CHM. Interacts with the non-phosphorylated forms of RAB3A, RAB3B, RAB3C, RAB3D, RAB5B, RAB5C, RAB8A, RAB8B, RAB10, RAB12, RAB35, and RAB43.

It is found in the cytoplasm. The protein localises to the cytosol. Its function is as follows. Substrate-binding subunit (component A) of the Rab geranylgeranyltransferase (GGTase) complex. Binds unprenylated Rab proteins and presents the substrate peptide to the catalytic component B. The component A is thought to be regenerated by transferring its prenylated Rab back to the donor membrane. Less effective than CHM in supporting prenylation of Rab3 family. This chain is Rab proteins geranylgeranyltransferase component A 2 (CHML), found in Homo sapiens (Human).